The following is a 131-amino-acid chain: Small ribosomal subunit protein uS8 (131 aa).

This sequence belongs to the universal ribosomal protein uS8 family. As to quaternary structure, part of the 30S ribosomal subunit. Contacts proteins S5 and S12.

Its function is as follows. One of the primary rRNA binding proteins, it binds directly to 16S rRNA central domain where it helps coordinate assembly of the platform of the 30S subunit. The protein is Small ribosomal subunit protein uS8 of Azoarcus sp. (strain BH72).